The following is a 715-amino-acid chain: Fatty acid oxidation complex subunit alpha (715 aa).

Positions 1–190 (MIYEGKAITV…KVGAVDAVVA (190 aa)) are enoyl-CoA hydratase/isomerase. Asp-297 is a binding site for substrate. The segment at 312–715 (RDVKQAAVLG…MAKNGQSFFG (404 aa)) is 3-hydroxyacyl-CoA dehydrogenase. Residues Met-325, Asp-344, 401–403 (VVE), Lys-408, and Ser-430 contribute to the NAD(+) site. His-451 functions as the For 3-hydroxyacyl-CoA dehydrogenase activity in the catalytic mechanism. Asn-454 contributes to the NAD(+) binding site. Residues Asn-501 and Tyr-660 each contribute to the substrate site.

In the N-terminal section; belongs to the enoyl-CoA hydratase/isomerase family. It in the C-terminal section; belongs to the 3-hydroxyacyl-CoA dehydrogenase family. Heterotetramer of two alpha chains (FadB) and two beta chains (FadA).

The catalysed reaction is a (3S)-3-hydroxyacyl-CoA + NAD(+) = a 3-oxoacyl-CoA + NADH + H(+). It catalyses the reaction a (3S)-3-hydroxyacyl-CoA = a (2E)-enoyl-CoA + H2O. It carries out the reaction a 4-saturated-(3S)-3-hydroxyacyl-CoA = a (3E)-enoyl-CoA + H2O. The enzyme catalyses (3S)-3-hydroxybutanoyl-CoA = (3R)-3-hydroxybutanoyl-CoA. The catalysed reaction is a (3Z)-enoyl-CoA = a 4-saturated (2E)-enoyl-CoA. It catalyses the reaction a (3E)-enoyl-CoA = a 4-saturated (2E)-enoyl-CoA. It participates in lipid metabolism; fatty acid beta-oxidation. Its function is as follows. Involved in the aerobic and anaerobic degradation of long-chain fatty acids via beta-oxidation cycle. Catalyzes the formation of 3-oxoacyl-CoA from enoyl-CoA via L-3-hydroxyacyl-CoA. It can also use D-3-hydroxyacyl-CoA and cis-3-enoyl-CoA as substrate. This chain is Fatty acid oxidation complex subunit alpha, found in Pseudomonas fluorescens (strain SBW25).